Consider the following 392-residue polypeptide: Outer membrane protein assembly factor BamB (392 aa).

Positions 1–19 are cleaved as a signal peptide; the sequence is MQLRKLLLPGLLSVTLLSG. Cys20 carries N-palmitoyl cysteine lipidation. A lipid anchor (S-diacylglycerol cysteine) is attached at Cys20.

This sequence belongs to the BamB family. As to quaternary structure, part of the Bam complex, which is composed of the outer membrane protein BamA, and four lipoproteins BamB, BamC, BamD and BamE. Monomer. Interacts directly with BamA. The Bam complex has the shape of a hat, with the BamA beta-barrel crown in the outer membrane and the periplasmic brim formed by the BamA POTRA domains and the 4 lipoproteins.

Its subcellular location is the cell outer membrane. Part of the outer membrane protein assembly complex (Bam), which is involved in assembly and insertion of beta-barrel proteins into the outer membrane. Nonessential member of the complex, which may orient the flexible periplasmic domain of BamA for interaction with other Bam components, chaperones and nascent outer membrane proteins. Efficient substrate folding and insertion into the outer membrane requires all 5 subunits. A lateral gate may open between the first and last strands of the BamA beta-barrel that allows substrate to insert into the outer membrane; comparison of the structures of complete and nearly complete Bam complexes show there is considerable movement of all 5 proteins. This Escherichia coli (strain K12) protein is Outer membrane protein assembly factor BamB.